The sequence spans 144 residues: 3-dehydroquinate dehydratase (144 aa).

Tyrosine 22 acts as the Proton acceptor in catalysis. Substrate contacts are provided by asparagine 73, histidine 79, and aspartate 86. The active-site Proton donor is the histidine 99. Residues 100-101 and arginine 110 each bind substrate; that span reads LS.

The protein belongs to the type-II 3-dehydroquinase family. In terms of assembly, homododecamer.

It carries out the reaction 3-dehydroquinate = 3-dehydroshikimate + H2O. The protein operates within metabolic intermediate biosynthesis; chorismate biosynthesis; chorismate from D-erythrose 4-phosphate and phosphoenolpyruvate: step 3/7. Functionally, catalyzes a trans-dehydration via an enolate intermediate. The chain is 3-dehydroquinate dehydratase from Pelotomaculum thermopropionicum (strain DSM 13744 / JCM 10971 / SI).